A 265-amino-acid polypeptide reads, in one-letter code: Speedy protein E8 (265 aa).

The tract at residues 1–80 (MGQILGKIMM…EPEKELAPEP (80 aa)) is disordered. Over residues 66-80 (DESDDEPEKELAPEP) the composition is skewed to acidic residues.

Belongs to the Speedy/Ringo family.

This Homo sapiens (Human) protein is Speedy protein E8.